A 74-amino-acid chain; its full sequence is Small ribosomal subunit protein bS18 (74 aa).

Belongs to the bacterial ribosomal protein bS18 family. In terms of assembly, part of the 30S ribosomal subunit. Forms a tight heterodimer with protein bS6.

Functionally, binds as a heterodimer with protein bS6 to the central domain of the 16S rRNA, where it helps stabilize the platform of the 30S subunit. The chain is Small ribosomal subunit protein bS18 from Sphingopyxis alaskensis (strain DSM 13593 / LMG 18877 / RB2256) (Sphingomonas alaskensis).